The primary structure comprises 234 residues: Serum amyloid P-component (234 aa).

The signal sequence occupies residues 1 to 22 (MDKLLSLLGVSILAGLLLEAFA). Residues 27 to 226 (TGKVFVFPRQ…YAVIRPRCVA (200 aa)) form the Pentraxin (PTX) domain. N-linked (GlcNAc...) asparagine glycosylation occurs at Asn-54. Residues Cys-58 and Cys-117 are joined by a disulfide bond. Asn-81, Glu-158, Gln-159, Asp-160, and Gln-170 together coordinate Ca(2+).

This sequence belongs to the pentraxin family. In terms of assembly, homopentamer. Pentraxin (or pentaxin) have a discoid arrangement of 5 non-covalently bound subunits. It depends on Ca(2+) as a cofactor.

The protein resides in the secreted. This Mesocricetus auratus (Golden hamster) protein is Serum amyloid P-component (APCS).